The sequence spans 347 residues: Ribosomal RNA small subunit methyltransferase C (347 aa).

This sequence belongs to the methyltransferase superfamily. RsmC family. In terms of assembly, monomer.

The protein localises to the cytoplasm. The enzyme catalyses guanosine(1207) in 16S rRNA + S-adenosyl-L-methionine = N(2)-methylguanosine(1207) in 16S rRNA + S-adenosyl-L-homocysteine + H(+). Functionally, specifically methylates the guanine in position 1207 of 16S rRNA in the 30S particle. This is Ribosomal RNA small subunit methyltransferase C from Yersinia pseudotuberculosis serotype IB (strain PB1/+).